A 277-amino-acid polypeptide reads, in one-letter code: 2-dehydro-3-deoxyphosphooctonate aldolase (277 aa).

This sequence belongs to the KdsA family.

It localises to the cytoplasm. It carries out the reaction D-arabinose 5-phosphate + phosphoenolpyruvate + H2O = 3-deoxy-alpha-D-manno-2-octulosonate-8-phosphate + phosphate. The protein operates within carbohydrate biosynthesis; 3-deoxy-D-manno-octulosonate biosynthesis; 3-deoxy-D-manno-octulosonate from D-ribulose 5-phosphate: step 2/3. It functions in the pathway bacterial outer membrane biogenesis; lipopolysaccharide biosynthesis. This is 2-dehydro-3-deoxyphosphooctonate aldolase from Hydrogenovibrio crunogenus (strain DSM 25203 / XCL-2) (Thiomicrospira crunogena).